The sequence spans 936 residues: Isoleucine--tRNA ligase (936 aa).

Residues 58-68 carry the 'HIGH' region motif; sequence PYANGRAHLGT. Glutamate 561 contacts L-isoleucyl-5'-AMP. Positions 602–606 match the 'KMSKS' region motif; it reads KMSKS. Lysine 605 lines the ATP pocket. Residues cysteine 899, cysteine 902, cysteine 919, and cysteine 922 each coordinate Zn(2+).

Belongs to the class-I aminoacyl-tRNA synthetase family. IleS type 1 subfamily. In terms of assembly, monomer. Requires Zn(2+) as cofactor.

It is found in the cytoplasm. The enzyme catalyses tRNA(Ile) + L-isoleucine + ATP = L-isoleucyl-tRNA(Ile) + AMP + diphosphate. Its function is as follows. Catalyzes the attachment of isoleucine to tRNA(Ile). As IleRS can inadvertently accommodate and process structurally similar amino acids such as valine, to avoid such errors it has two additional distinct tRNA(Ile)-dependent editing activities. One activity is designated as 'pretransfer' editing and involves the hydrolysis of activated Val-AMP. The other activity is designated 'posttransfer' editing and involves deacylation of mischarged Val-tRNA(Ile). The polypeptide is Isoleucine--tRNA ligase (Coxiella burnetii (strain CbuG_Q212) (Coxiella burnetii (strain Q212))).